We begin with the raw amino-acid sequence, 119 residues long: Large ribosomal subunit protein bL19 (119 aa).

Belongs to the bacterial ribosomal protein bL19 family.

Functionally, this protein is located at the 30S-50S ribosomal subunit interface and may play a role in the structure and function of the aminoacyl-tRNA binding site. The polypeptide is Large ribosomal subunit protein bL19 (Limosilactobacillus reuteri (strain DSM 20016) (Lactobacillus reuteri)).